Reading from the N-terminus, the 242-residue chain is Tryptophan synthase alpha chain (242 aa).

Residues E32 and D43 each act as proton acceptor in the active site.

The protein belongs to the TrpA family. Tetramer of two alpha and two beta chains.

Its subcellular location is the plastid. It is found in the chloroplast. It catalyses the reaction (1S,2R)-1-C-(indol-3-yl)glycerol 3-phosphate + L-serine = D-glyceraldehyde 3-phosphate + L-tryptophan + H2O. It functions in the pathway amino-acid biosynthesis; L-tryptophan biosynthesis; L-tryptophan from chorismate: step 5/5. Its function is as follows. The alpha subunit is responsible for the aldol cleavage of indoleglycerol phosphate to indole and glyceraldehyde 3-phosphate. The polypeptide is Tryptophan synthase alpha chain (Cyanidium caldarium (Red alga)).